A 238-amino-acid chain; its full sequence is NEDD4-binding protein 2-like 1 (238 aa).

Disordered regions lie at residues 1-36 and 183-212; these read MEDS…PRRH and VLHA…WNTY. Residues 20–31 are compositionally biased toward pro residues; sequence QPPPRPPPARGP. Residues 192 to 212 are compositionally biased toward polar residues; that stretch reads ANRNQGRNSEPSSGSGYWNTY.

Interacts with dynactin subunit proteins, including DCTN4, DCTN5 and DCTN5.

In terms of biological role, might play a role in adipocyte differentiation and triglyceride accumulation. The protein is NEDD4-binding protein 2-like 1 (N4bp2l1) of Mus musculus (Mouse).